The following is a 399-amino-acid chain: DNA primase DnaG (399 aa).

Residues 182–268 (DAIIVVEGRA…EVEDLTQKEI (87 aa)) form the Toprim domain. Mg(2+) is bound by residues Glu188, Asp230, and Asp232.

This sequence belongs to the archaeal DnaG primase family. Forms a ternary complex with MCM helicase and DNA. Component of the archaeal exosome complex. Mg(2+) serves as cofactor.

The catalysed reaction is ssDNA + n NTP = ssDNA/pppN(pN)n-1 hybrid + (n-1) diphosphate.. In terms of biological role, RNA polymerase that catalyzes the synthesis of short RNA molecules used as primers for DNA polymerase during DNA replication. Also part of the exosome, which is a complex involved in RNA degradation. Acts as a poly(A)-binding protein that enhances the interaction between heteromeric, adenine-rich transcripts and the exosome. This Archaeoglobus fulgidus (strain ATCC 49558 / DSM 4304 / JCM 9628 / NBRC 100126 / VC-16) protein is DNA primase DnaG.